The following is a 453-amino-acid chain: Secreted triacylglycerol lipase LIP2 (453 aa).

Residues Met-1–Ala-19 form the signal peptide. An N-linked (GlcNAc...) asparagine glycan is attached at Asn-98. The cysteines at positions 115 and 284 are disulfide-linked. Ser-197 serves as the catalytic Nucleophile. N-linked (GlcNAc...) asparagine glycosylation is present at Asn-230. Catalysis depends on residues Asp-344 and His-378. Residues Cys-360 and Cys-406 are joined by a disulfide bond.

Belongs to the AB hydrolase superfamily. Lipase family. Class Lip subfamily.

The protein localises to the secreted. It catalyses the reaction a triacylglycerol + H2O = a diacylglycerol + a fatty acid + H(+). The catalysed reaction is a monoacylglycerol + H2O = glycerol + a fatty acid + H(+). It carries out the reaction a diacylglycerol + H2O = a monoacylglycerol + a fatty acid + H(+). With respect to regulation, the activity is significantly increased in the presence of Triton X-100 and partially inhibited by PMSF but unaffected by univalent and divalent metal ions. Activity is significantly decreased in acetate buffer compared to that in citrate buffer at the same pH. Its function is as follows. Major secreted lipase involved in Dandruff and seborrheic dermatitis (D/SD) probably via lipase-mediated breakdown of sebaceous lipids and release of irritating free fatty acids. Has triacylglycerol lipase activity and is able to hydrolyze triolein, tristearin, trilinolein, tripalmitoylglycerol and trihexadecenoin. Hydrolyze diacylglycerols such as distearin, dilinolein, dipalmitoylglycerol and dipalmitolein. Shows high esterase activity against 4-nitrophenyl palmitate and 1-naphthyl palmitate but not 1-naphthyl acetate, suggesting that it specifically recognizes fatty acids. Mostly converts monoolein to di- and triolein, while free fatty acids are only produced in low amounts. This Malassezia globosa (strain ATCC MYA-4612 / CBS 7966) (Dandruff-associated fungus) protein is Secreted triacylglycerol lipase LIP2.